We begin with the raw amino-acid sequence, 906 residues long: Alanine--tRNA ligase, chloroplastic/mitochondrial (906 aa).

Residues 1-10 (MSAATERERL) are compositionally biased toward basic and acidic residues. Residues 1–22 (MSAATERERLTNANPNARGKDN) form a disordered region. H589, H593, C691, and H695 together coordinate Zn(2+).

The protein belongs to the class-II aminoacyl-tRNA synthetase family. As to quaternary structure, monomer. The cofactor is Zn(2+).

It is found in the plastid. Its subcellular location is the chloroplast. The protein localises to the mitochondrion. It carries out the reaction tRNA(Ala) + L-alanine + ATP = L-alanyl-tRNA(Ala) + AMP + diphosphate. In terms of biological role, catalyzes the attachment of alanine to tRNA(Ala) in a two-step reaction: alanine is first activated by ATP to form Ala-AMP and then transferred to the acceptor end of tRNA(Ala). Also edits incorrectly charged tRNA(Ala) via its editing domain. This is Alanine--tRNA ligase, chloroplastic/mitochondrial from Ostreococcus lucimarinus (strain CCE9901).